We begin with the raw amino-acid sequence, 274 residues long: Diaminopimelate epimerase (274 aa).

Substrate-binding residues include Asn11 and Asn65. Residue Cys74 is the Proton donor of the active site. Substrate is bound by residues 75 to 76 (GN), Asn158, Asn191, and 209 to 210 (ER). The active-site Proton acceptor is Cys218. 219-220 (GT) serves as a coordination point for substrate.

This sequence belongs to the diaminopimelate epimerase family. As to quaternary structure, homodimer.

Its subcellular location is the cytoplasm. It catalyses the reaction (2S,6S)-2,6-diaminopimelate = meso-2,6-diaminopimelate. It functions in the pathway amino-acid biosynthesis; L-lysine biosynthesis via DAP pathway; DL-2,6-diaminopimelate from LL-2,6-diaminopimelate: step 1/1. Functionally, catalyzes the stereoinversion of LL-2,6-diaminopimelate (L,L-DAP) to meso-diaminopimelate (meso-DAP), a precursor of L-lysine and an essential component of the bacterial peptidoglycan. This Carboxydothermus hydrogenoformans (strain ATCC BAA-161 / DSM 6008 / Z-2901) protein is Diaminopimelate epimerase.